The sequence spans 395 residues: Zinc finger protein 385D (395 aa).

Matrin-type zinc fingers lie at residues 80 to 110 (ISCNICQLRFNSDSQAAAHYKGTKHAKKLKA), 204 to 234 (LYCSLCKVAVNSASQLEAHNSGTKHKTMLEA), and 267 to 297 (FHCEICDVHVNSETQLKQHISSRRHKDRASG). Residues 282–308 (LKQHISSRRHKDRASGKPPKPKYSPYN) are disordered.

The protein resides in the nucleus. This is Zinc finger protein 385D (Znf385d) from Rattus norvegicus (Rat).